A 488-amino-acid polypeptide reads, in one-letter code: Ribulose bisphosphate carboxylase large chain (488 aa).

Substrate contacts are provided by N127 and T177. K179 functions as the Proton acceptor in the catalytic mechanism. K181 provides a ligand contact to substrate. The Mg(2+) site is built by K205, D207, and E208. K205 carries the N6-carboxylysine modification. H297 functions as the Proton acceptor in the catalytic mechanism. Positions 298, 330, and 382 each coordinate substrate.

It belongs to the RuBisCO large chain family. Type I subfamily. Heterohexadecamer of 8 large chains and 8 small chains. Requires Mg(2+) as cofactor.

It is found in the plastid. It localises to the chloroplast. It catalyses the reaction 2 (2R)-3-phosphoglycerate + 2 H(+) = D-ribulose 1,5-bisphosphate + CO2 + H2O. The enzyme catalyses D-ribulose 1,5-bisphosphate + O2 = 2-phosphoglycolate + (2R)-3-phosphoglycerate + 2 H(+). RuBisCO catalyzes two reactions: the carboxylation of D-ribulose 1,5-bisphosphate, the primary event in carbon dioxide fixation, as well as the oxidative fragmentation of the pentose substrate in the photorespiration process. Both reactions occur simultaneously and in competition at the same active site. The sequence is that of Ribulose bisphosphate carboxylase large chain from Olisthodiscus luteus (Marine phytoflagellate).